Reading from the N-terminus, the 144-residue chain is Large ribosomal subunit protein uL15 (144 aa).

The disordered stretch occupies residues 1–49; sequence MRLNTLSPAAGAKSAAKRVGRGIGSGTGKTCGRGHKGQKSRSGGGVRVG. Residues 21-31 show a composition bias toward gly residues; it reads RGIGSGTGKTC.

The protein belongs to the universal ribosomal protein uL15 family. In terms of assembly, part of the 50S ribosomal subunit.

Functionally, binds to the 23S rRNA. In Shewanella sediminis (strain HAW-EB3), this protein is Large ribosomal subunit protein uL15.